Here is a 338-residue protein sequence, read N- to C-terminus: Ketol-acid reductoisomerase (NADP(+)) (338 aa).

Residues 1–181 (MKVSYDKDCD…GGGRTGIIET (181 aa)) form the KARI N-terminal Rossmann domain. Residues 24–27 (YGSQ), R47, S50, S52, and 82–85 (DEFQ) contribute to the NADP(+) site. H107 is a catalytic residue. Residue G133 participates in NADP(+) binding. One can recognise a KARI C-terminal knotted domain in the interval 182–327 (TFKDETETDL…EKLRAMMPWI (146 aa)). Residues D190, E194, E226, and E230 each contribute to the Mg(2+) site. S251 is a substrate binding site.

It belongs to the ketol-acid reductoisomerase family. Mg(2+) serves as cofactor.

The enzyme catalyses (2R)-2,3-dihydroxy-3-methylbutanoate + NADP(+) = (2S)-2-acetolactate + NADPH + H(+). It carries out the reaction (2R,3R)-2,3-dihydroxy-3-methylpentanoate + NADP(+) = (S)-2-ethyl-2-hydroxy-3-oxobutanoate + NADPH + H(+). It functions in the pathway amino-acid biosynthesis; L-isoleucine biosynthesis; L-isoleucine from 2-oxobutanoate: step 2/4. It participates in amino-acid biosynthesis; L-valine biosynthesis; L-valine from pyruvate: step 2/4. Involved in the biosynthesis of branched-chain amino acids (BCAA). Catalyzes an alkyl-migration followed by a ketol-acid reduction of (S)-2-acetolactate (S2AL) to yield (R)-2,3-dihydroxy-isovalerate. In the isomerase reaction, S2AL is rearranged via a Mg-dependent methyl migration to produce 3-hydroxy-3-methyl-2-ketobutyrate (HMKB). In the reductase reaction, this 2-ketoacid undergoes a metal-dependent reduction by NADPH to yield (R)-2,3-dihydroxy-isovalerate. The sequence is that of Ketol-acid reductoisomerase (NADP(+)) from Stutzerimonas stutzeri (strain A1501) (Pseudomonas stutzeri).